A 505-amino-acid chain; its full sequence is MKALIIDCLASGDGKRILARDVIGAGPRTVKGILQSEGIEAKITPVEDLDIKDIKKYNLIFISAMTSDFKCVKKLVERIRLKTDSKIIVGGPIANDINILEKIEADISIVGEGEITIRELIKKDFDAEDVKGTTYWDYNEDELKINPLREILTDLKLITPSTEIKDYKNYFSARVYVEVVRGCSNFKRPLLLCTNKKCNLCENGTLKCPLNINPGCGFCSVPSVFGYARSRDEEDILKEVEALLKEGVNRIVLSAPDFLDYKRGEKLINPYFPEPNYEAIESLLSKCKDLADKYNANVLIENIKANLFNEKVAEIFSKYLKTPIYIGCESGDKNHCKLLGRPTTPDDVLKAVKIAKKYNLKAQVYFIYGLPGENEETAKNTVNFMHKIKNYIDKITVYKFRPLPMSAFQNFKPNITKYSLLIRETANKINLEIKKKYIGRVLEVIISERHFRNKRDAIGYLPDSGLMVVVKDGAKFIGKTKKVKIIKAYEKYLEGRILKTWLCKY.

One can recognise a Radical SAM core domain in the interval 193–440 (CTNKKCNLCE…LEIKKKYIGR (248 aa)). Positions 208, 216, and 219 each coordinate [4Fe-4S] cluster. Residues 435–499 (KKYIGRVLEV…EKYLEGRILK (65 aa)) form the TRAM domain.

It depends on [4Fe-4S] cluster as a cofactor.

This is an uncharacterized protein from Methanocaldococcus jannaschii (strain ATCC 43067 / DSM 2661 / JAL-1 / JCM 10045 / NBRC 100440) (Methanococcus jannaschii).